Consider the following 480-residue polypeptide: Voltage-gated potassium channel regulatory subunit KCNG2 (480 aa).

Disordered stretches follow at residues 1–25 and 144–167; these read MARL…GRGG and AAEA…LGSG. Over 1–187 the chain is Cytoplasmic; sequence MARLPGHPEV…DVVENPHSGL (187 aa). Residues 188 to 209 traverse the membrane as a helical segment; the sequence is AGKLFAYVSVAFVAVTAVGLCL. Residues 210-230 are Extracellular-facing; it reads STMPDVRAEEERGECSTKCRN. The chain crosses the membrane as a helical span at residues 231–252; that stretch reads LFVLETVCVAWFSFEFLLRSLQ. The Cytoplasmic segment spans residues 253-263; sequence AESKCAFLRTP. A helical membrane pass occupies residues 264 to 284; sequence LAIIDILAILPFYVSLLAGLA. Over 285 to 296 the chain is Extracellular; it reads AGPTGSKMLERA. The chain crosses the membrane as a helical; Voltage-sensor span at residues 297–317; sequence GLVLRLLRALRVLYVMRLARH. The Cytoplasmic segment spans residues 318 to 332; sequence SLGLRSLGLTVRRCA. A helical membrane pass occupies residues 333–354; the sequence is REFGLLLLFLCVAMALFAPLVH. Residues 355–369 are Extracellular-facing; the sequence is LAERELGAHRDFSSV. Residues 370-381 constitute an intramembrane region (helical); that stretch reads PASYWWAVISMT. The short motif at 382–387 is the Selectivity filter element; sequence TVGYGD. An intramembrane segment occupies 382–389; that stretch reads TVGYGDMV. Residues 390–396 lie on the Extracellular side of the membrane; sequence PRSLPGQ. A helical membrane pass occupies residues 397 to 425; sequence VVALSSILSGILLMAFPVTSIFHTFSRSY. Residues 426 to 480 lie on the Cytoplasmic side of the membrane; the sequence is SELKEQQQRAASPEPVLREDSTRDDSTRSASATEDSSQDPETAGAAGSLPGPVGP. The tract at residues 429 to 480 is disordered; it reads KEQQQRAASPEPVLREDSTRDDSTRSASATEDSSQDPETAGAAGSLPGPVGP. Residues 441–452 are compositionally biased toward basic and acidic residues; sequence VLREDSTRDDST.

It belongs to the potassium channel family. G (TC 1.A.1.2) subfamily. Kv6.2/KCNG2 sub-subfamily. As to quaternary structure, heterodimer with KCNB1. In terms of tissue distribution, highly expressed in heart, in particular in right and left atrium, and detected at lower levels in the right and left ventricle.

The protein localises to the cell membrane. In terms of biological role, regulatory alpha-subunit of the voltage-gated potassium (Kv) channel which, when coassembled with KCNB1, can modulate the kinetics and conductance-voltage relationship. Modulates channel activity by shifting the threshold and the half-maximal activation to more negative values. Potassium channel subunit that does not form functional channels by itself. This Rattus norvegicus (Rat) protein is Voltage-gated potassium channel regulatory subunit KCNG2.